A 1491-amino-acid chain; its full sequence is Terminal uridylyltransferase 7 (1491 aa).

T64 is modified (phosphothreonine). S132 and S172 each carry phosphoserine. The tract at residues 165 to 203 is disordered; the sequence is MSEMEAGSPENKKQRSRPRKPRRTRTEDSEQDGDLDGPV. The span at 178–187 shows a compositional bias: basic residues; that stretch reads QRSRPRKPRR. Residues 244-274 form a Matrin-type zinc finger; sequence YTCKLCDALIDSIPFAHKHIKEKRHKKNLKE. Residues 551–600 enclose the PAP-associated 1 domain; it reads VGQLWVELLRFYALEFNLADLVISIRVKELISRESKDWPKKRIAIEDPYS. Residues S600 and S747 each carry the phosphoserine modification. 2 disordered regions span residues 740-774 and 834-911; these read AELPETGSDNEEVRRKTKHPLSTDDQGLSSSKHPE and QSRT…CGEN. Residues 844–857 are compositionally biased toward acidic residues; the sequence is DDEEEEEEEEEEEE. Phosphothreonine is present on T865. A compositionally biased stretch (acidic residues) spans 885-897; it reads GEEDALSEEDDLA. A Phosphoserine modification is found at S891. Residues 947-1491 are sufficient for monouridylation activity; it reads RKLTFTKGKS…ASVKRTQQES (545 aa). The CCHC-type 1 zinc-finger motif lies at 959 to 976; it reads VVCSLCKREGHLKKDCPE. UTP contacts are provided by residues 1043–1046, 1053–1056, N1126, K1148, 1166–1170, and H1282; these read SSKN, SDLD, and SYAYT. The Mg(2+) site is built by D1054 and D1056. Residues 1230–1282 enclose the PAP-associated 2 domain; the sequence is VGQLWLGLLRFYTEEFDFKEHVISIRRKSLLTTFKKQWTSKYIVIEDPFDLNH. Residues 1341-1358 form a CCHC-type 2 zinc finger; the sequence is RCCRICGKIGHFMKDCPM. 2 disordered regions span residues 1362-1399 and 1463-1491; these read VRRRRDQEDTPNQRYSESKEKRSKEDKEIQNKYTEKEV and PQFKGSPGSLSSKYMTQGRASVKRTQQES. The segment covering 1377 to 1399 has biased composition (basic and acidic residues); sequence SESKEKRSKEDKEIQNKYTEKEV. The CCHC-type 3 zinc-finger motif lies at 1447–1464; it reads KRCFICGREGHIKKECPQ. The span at 1470 to 1481 shows a compositional bias: polar residues; sequence GSLSSKYMTQGR.

This sequence belongs to the DNA polymerase type-B-like family. The cofactor is Mg(2+). Mn(2+) serves as cofactor.

The protein localises to the cytoplasm. It carries out the reaction RNA(n) + UTP = RNA(n)-3'-uridine ribonucleotide + diphosphate. In terms of biological role, uridylyltransferase that mediates the terminal uridylation of mRNAs with short (less than 25 nucleotides) poly(A) tails, hence facilitating global mRNA decay. Essential for both oocyte maturation and fertility. Through 3' terminal uridylation of mRNA, sculpts, with TUT7, the maternal transcriptome by eliminating transcripts during oocyte growth. Involved in microRNA (miRNA)-induced gene silencing through uridylation of deadenylated miRNA targets. Also acts as a suppressor of miRNA biogenesis by mediating the terminal uridylation of miRNA precursors, including that of let-7 (pre-let-7). Uridylated pre-let-7 RNA is not processed by Dicer and undergo degradation. Pre-let-7 uridylation is strongly enhanced in the presence of LIN28A. Due to functional redundancy between ZCCHC6 and ZCCHC11, the identification of the specific role of each of these proteins is difficult. Involved in microRNA (miRNA)-induced gene silencing through uridylation of deadenylated miRNA targets. Also functions as an integral regulator of microRNA biogenesiS using 3 different uridylation mechanisms. Acts as a suppressor of miRNA biogenesis by mediating the terminal uridylation of some miRNA precursors, including that of let-7 (pre-let-7). Uridylated pre-let-7 RNA is not processed by Dicer and undergo degradation. Pre-let-7 oligouridylation is strongly enhanced in the presence of LIN28A. In the absence of LIN28A, TUT7 and TUT4 monouridylate group II pre-miRNAs, which includes most of pre-let7 members, that shapes an optimal 3' end overhang for efficient processing. Add oligo-U tails to truncated pre-miRNAS with a 5' overhang which may promote rapid degradation of non-functional pre-miRNA species. Does not play a role in replication-dependent histone mRNA degradation. Due to functional redundancy between TUT4 and TUT7, the identification of the specific role of each of these proteins is difficult. TUT4 and TUT7 restrict retrotransposition of long interspersed element-1 (LINE-1) in cooperation with MOV10 counteracting the RNA chaperonne activity of L1RE1. TUT7 uridylates LINE-1 mRNAs in the cytoplasm which inhibits initiation of reverse transcription once in the nucleus, whereas uridylation by TUT4 destabilizes mRNAs in cytoplasmic ribonucleoprotein granules. The protein is Terminal uridylyltransferase 7 of Mus musculus (Mouse).